A 214-amino-acid chain; its full sequence is ATP phosphoribosyltransferase (214 aa).

This sequence belongs to the ATP phosphoribosyltransferase family. Short subfamily. Heteromultimer composed of HisG and HisZ subunits.

Its subcellular location is the cytoplasm. It catalyses the reaction 1-(5-phospho-beta-D-ribosyl)-ATP + diphosphate = 5-phospho-alpha-D-ribose 1-diphosphate + ATP. The protein operates within amino-acid biosynthesis; L-histidine biosynthesis; L-histidine from 5-phospho-alpha-D-ribose 1-diphosphate: step 1/9. Its function is as follows. Catalyzes the condensation of ATP and 5-phosphoribose 1-diphosphate to form N'-(5'-phosphoribosyl)-ATP (PR-ATP). Has a crucial role in the pathway because the rate of histidine biosynthesis seems to be controlled primarily by regulation of HisG enzymatic activity. In Alcanivorax borkumensis (strain ATCC 700651 / DSM 11573 / NCIMB 13689 / SK2), this protein is ATP phosphoribosyltransferase.